Here is a 1035-residue protein sequence, read N- to C-terminus: Retinoblastoma-related protein (1035 aa).

A disordered region spans residues 403–426 (ITSPLSPHRSPASHANGIPGSANS). The interval 431 to 632 (TPVSTAMTTA…EKGSSLYNSL (202 aa)) is domain A. The tract at residues 431 to 885 (TPVSTAMTTA…NEIFIPAAKP (455 aa)) is pocket. Positions 633–753 (TVARPALSAE…PGGGGETCAE (121 aa)) are spacer. Disordered regions lie at residues 674 to 697 (PSLQKHETSPGSGQNGDLRSPKRP) and 721 to 748 (GNLKSKLPPPPLQSAFASPTRPNPGGGG). The interval 754–885 (TGINVFFTKI…NEIFIPAAKP (132 aa)) is domain B.

This sequence belongs to the retinoblastoma protein (RB) family.

The protein resides in the nucleus. Functionally, regulator of biological processes that recruits a histone deacetylase to control gene transcription. May play a role in the entry into mitosis, negatively regulating the cell proliferation. Formation of stable complexes with geminiviridae replication-associated proteins may create a cellular environment which favors viral DNA replication. In Populus trichocarpa (Western balsam poplar), this protein is Retinoblastoma-related protein (RBL901).